A 579-amino-acid chain; its full sequence is DNA ligase 1 (579 aa).

ATP is bound at residue Glu-244. Lys-246 (N6-AMP-lysine intermediate) is an active-site residue. ATP is bound by residues Arg-251, Arg-266, Glu-296, Phe-342, Arg-419, and Lys-425.

The protein belongs to the ATP-dependent DNA ligase family. The cofactor is Mg(2+).

It carries out the reaction ATP + (deoxyribonucleotide)n-3'-hydroxyl + 5'-phospho-(deoxyribonucleotide)m = (deoxyribonucleotide)n+m + AMP + diphosphate.. In terms of biological role, DNA ligase that seals nicks in double-stranded DNA during DNA replication, DNA recombination and DNA repair. This Methanosarcina mazei (strain ATCC BAA-159 / DSM 3647 / Goe1 / Go1 / JCM 11833 / OCM 88) (Methanosarcina frisia) protein is DNA ligase 1.